A 562-amino-acid polypeptide reads, in one-letter code: Cytosolic Fe-S cluster assembly factor nar1 (562 aa).

[4Fe-4S] cluster is bound at residue C20. A disordered region spans residues 28 to 47; sequence PKNESSNSQNPYEVTTEDKV. Residues 29 to 40 are compositionally biased toward polar residues; sequence KNESSNSQNPYE. C62, C65, C68, C214, and C269 together coordinate [4Fe-4S] cluster. Positions 439–462 are disordered; that stretch reads ARVPAASAGGNRRQPISRNSASAG. A compositionally biased stretch (polar residues) spans 452-462; the sequence is QPISRNSASAG. Residues C475 and C479 each contribute to the [4Fe-4S] cluster site. Disordered regions lie at residues 492–513 and 541–562; these read REAS…PTPH and HSPS…IGLT. Positions 494–505 are enriched in polar residues; that stretch reads ASTSTQSVTAVE.

The protein belongs to the NARF family.

Functionally, component of the cytosolic Fe/S protein assembly machinery. Required for maturation of extramitochondrial Fe/S proteins. May play a role in the transfer of pre-assembled Fe/S clusters to target apoproteins. The sequence is that of Cytosolic Fe-S cluster assembly factor nar1 (nar1) from Aspergillus flavus (strain ATCC 200026 / FGSC A1120 / IAM 13836 / NRRL 3357 / JCM 12722 / SRRC 167).